The sequence spans 210 residues: Mitochondrial import receptor subunit TOM20-2 (210 aa).

M1 is subject to N-acetylmethionine. Over 1–178 (MEFSTADFER…SSKKKKRNTE (178 aa)) the chain is Cytoplasmic. TPR repeat units lie at residues 42 to 75 (LLEL…NPGK) and 83 to 120 (ANAY…DPGN). Positions 151 to 161 (GGGGGGGGGGM) are enriched in gly residues. Residues 151-172 (GGGGGGGGGGMASSNVSQSSKK) form a disordered region. A helical membrane pass occupies residues 179-199 (FTYDVCGWIILACGIVAWVGM). Residues 200–210 (AKSLGPPPPAR) are Mitochondrial intermembrane-facing.

Belongs to the Tom20 family. As to quaternary structure, forms part of the preprotein translocase complex of the outer mitochondrial membrane (TOM complex) which consists of at least 6 different proteins (TOM5, TOM6, TOM7, TOM20, TOM22/TOM9 and TOM40). Component of a mitochondrial large protein complex that contains, at least, MIC60, DGS1, TOM40, TOM20 proteins, and petC/RISP. The N-terminus is blocked. As to expression, expressed in roots, flowers, young cotyledons and leaves.

The protein localises to the mitochondrion outer membrane. In terms of biological role, central component of the receptor complex responsible for the recognition and translocation of cytosolically synthesized mitochondrial preproteins. Together with TOM22 functions as the transit peptide receptor at the surface of the mitochondrion outer membrane and facilitates the movement of preproteins into the translocation pore. The protein is Mitochondrial import receptor subunit TOM20-2 of Arabidopsis thaliana (Mouse-ear cress).